A 122-amino-acid polypeptide reads, in one-letter code: Cupin 2 conserved barrel domain-containing protein (122 aa).

The segment at 55–119 (PGGVTTAEDH…DSPVEIVSIW (65 aa)) is cupin 2 conserved barrel. 4 residues coordinate Zn(2+): D63, H65, E69, and H103.

It depends on Zn(2+) as a cofactor.

The catalysed reaction is N(6)-hydroxy-L-lysine + L-glutamate + ATP = 1-L-glutamo-2-N(6-)L-lysinohydrazine + AMP + diphosphate + 2 H(+). With respect to regulation, inhibited by 1,10-phenanthroline (OP). Functionally, catalyzes hydrazine (N-N) bond formation from an unstable ester intermediate, the product of the ATP-dependent condensation of L-N(6)-OH-lysine and L-glutamine substrates by a methionyl-tRNA synthase-like protein. The protein is Cupin 2 conserved barrel domain-containing protein of Rhodococcus jostii (strain RHA1).